Consider the following 534-residue polypeptide: MKYIIVTGGVMSGLGKGITIASIGRNLKDKGYKVTAIKIDPYINIDAGTMSPYQHGEVFVLKDGGEVDLDLGNYERFLDTELTRDHNLTTGKIYLEVISKERRGDYLGKTVQIIPHVTNEIKSRIRKVAARSGADICLIEIGGTVGDIESMPFLEAVRQMHREEPSENIAFIHVTLAMEDLQGEQKTKPSQHSVKELRALGLSPEVIVVRSKSPLQESAKEKIALFCDVPQELVISAHDADDIYEVPLEIEEQGLTTQLMKHLQLESSVENGAWKKMVSRMHSTTNTVKLAIVGKYTNLEDSYLSILEAVKHGGIDNGCRVEVNMVEAEILEENPAEIEKLIQYDGILIPGGFGGRGTEGKMMAIKFARENDIPFLGICLGMQLAVIEFARNVAKLKGANSTEFDEDSPYPVIDLLPEQTGVAEMGGTMRLGDYEAILTEGSIAAKIYGTNYIVERHRHRYEVNPEFVDRLESYGIVFSGKNKNRMEIAEIPGKRFFFGSQFHPEFRSRPGRPSPPFNGLVAAMCKYRKEREGR.

Residues 1 to 265 (MKYIIVTGGV…TTQLMKHLQL (265 aa)) form an amidoligase domain region. CTP is bound at residue Ser-12. Ser-12 lines the UTP pocket. 13-18 (GLGKGI) provides a ligand contact to ATP. An L-glutamine-binding site is contributed by Tyr-53. Asp-70 provides a ligand contact to ATP. Residues Asp-70 and Glu-140 each contribute to the Mg(2+) site. Residues 147-149 (DIE), 186-191 (KTKPSQ), and Lys-222 contribute to the CTP site. Residues 186–191 (KTKPSQ) and Lys-222 each bind UTP. The 242-residue stretch at 289 to 530 (KLAIVGKYTN…VAAMCKYRKE (242 aa)) folds into the Glutamine amidotransferase type-1 domain. L-glutamine is bound at residue Gly-352. The Nucleophile; for glutamine hydrolysis role is filled by Cys-379. Residues 380 to 383 (LGMQ), Glu-403, and Arg-460 contribute to the L-glutamine site. Catalysis depends on residues His-503 and Glu-505.

The protein belongs to the CTP synthase family. In terms of assembly, homotetramer.

The enzyme catalyses UTP + L-glutamine + ATP + H2O = CTP + L-glutamate + ADP + phosphate + 2 H(+). It carries out the reaction L-glutamine + H2O = L-glutamate + NH4(+). The catalysed reaction is UTP + NH4(+) + ATP = CTP + ADP + phosphate + 2 H(+). It functions in the pathway pyrimidine metabolism; CTP biosynthesis via de novo pathway; CTP from UDP: step 2/2. Allosterically activated by GTP, when glutamine is the substrate; GTP has no effect on the reaction when ammonia is the substrate. The allosteric effector GTP functions by stabilizing the protein conformation that binds the tetrahedral intermediate(s) formed during glutamine hydrolysis. Inhibited by the product CTP, via allosteric rather than competitive inhibition. Functionally, catalyzes the ATP-dependent amination of UTP to CTP with either L-glutamine or ammonia as the source of nitrogen. Regulates intracellular CTP levels through interactions with the four ribonucleotide triphosphates. The sequence is that of CTP synthase from Methanosarcina barkeri (strain Fusaro / DSM 804).